The chain runs to 317 residues: MSNQLQALRDITTVVADTGDIEAIKKYQPVDATTNPSLLLKAAEMEQYRSHLENAVAWAKEQSDDADQQIIDAGDKLAVTIGTDIVNIVPGRISTEVDARLSFDTQASIEKAHKLIALYKEAGIDKSRILIKLASTWEGIKAAEHLEKEGINCNLTLLFSFAQAQACAEAGAYLISPFVGRILDWYKAKTGKTEYAASEDPGVQSVTKIYNYYKEHGYKTVVMGASFRNIGEITELAGCDRLTISPGLLEELSNSDAPLEVKLKDTGATTTPGKPLDEAAFRWEMNQDAMATEKLSEGIRNFAADQVKLETLLKSYV.

K132 acts as the Schiff-base intermediate with substrate in catalysis.

Belongs to the transaldolase family. Type 1 subfamily. As to quaternary structure, homodimer.

The protein localises to the cytoplasm. It carries out the reaction D-sedoheptulose 7-phosphate + D-glyceraldehyde 3-phosphate = D-erythrose 4-phosphate + beta-D-fructose 6-phosphate. Its pathway is carbohydrate degradation; pentose phosphate pathway; D-glyceraldehyde 3-phosphate and beta-D-fructose 6-phosphate from D-ribose 5-phosphate and D-xylulose 5-phosphate (non-oxidative stage): step 2/3. Its function is as follows. Transaldolase is important for the balance of metabolites in the pentose-phosphate pathway. In Pseudoalteromonas atlantica (strain T6c / ATCC BAA-1087), this protein is Transaldolase.